Reading from the N-terminus, the 115-residue chain is Large ribosomal subunit protein bL20c (115 aa).

It belongs to the bacterial ribosomal protein bL20 family.

It localises to the plastid. The protein localises to the chloroplast. Binds directly to 23S ribosomal RNA and is necessary for the in vitro assembly process of the 50S ribosomal subunit. It is not involved in the protein synthesizing functions of that subunit. In Physcomitrium patens (Spreading-leaved earth moss), this protein is Large ribosomal subunit protein bL20c.